We begin with the raw amino-acid sequence, 380 residues long: Acetylornithine deacetylase (380 aa).

H79 serves as a coordination point for Zn(2+). D81 is an active-site residue. D109 is a binding site for Zn(2+). E139 is an active-site residue. Residues E140, E164, and H351 each coordinate Zn(2+).

This sequence belongs to the peptidase M20A family. ArgE subfamily. Homodimer. It depends on Zn(2+) as a cofactor. Co(2+) is required as a cofactor. Glutathione serves as cofactor.

It is found in the cytoplasm. It carries out the reaction N(2)-acetyl-L-ornithine + H2O = L-ornithine + acetate. The protein operates within amino-acid biosynthesis; L-arginine biosynthesis; L-ornithine from N(2)-acetyl-L-ornithine (linear): step 1/1. Functionally, catalyzes the hydrolysis of the amide bond of N(2)-acetylated L-amino acids. Cleaves the acetyl group from N-acetyl-L-ornithine to form L-ornithine, an intermediate in L-arginine biosynthesis pathway, and a branchpoint in the synthesis of polyamines. This chain is Acetylornithine deacetylase, found in Myxococcus xanthus.